A 238-amino-acid chain; its full sequence is Probable metal transport system ATP-binding protein TP_0035 (238 aa).

The 222-residue stretch at 10 to 231 (VLLQNVSFRY…LDMQKKDALA (222 aa)) folds into the ABC transporter domain. 44 to 51 (GENGSGKS) provides a ligand contact to ATP.

It belongs to the ABC transporter superfamily.

It localises to the cell inner membrane. Its function is as follows. Part of an ATP-driven transport system TP_0034/TP_0035/TP_0036 for a metal. Probably responsible for energy coupling to the transport system. The chain is Probable metal transport system ATP-binding protein TP_0035 from Treponema pallidum (strain Nichols).